Here is a 490-residue protein sequence, read N- to C-terminus: UDP-N-acetylmuramate--L-alanine ligase (490 aa).

122 to 128 (GTHGKTS) serves as a coordination point for ATP.

This sequence belongs to the MurCDEF family.

The protein resides in the cytoplasm. It carries out the reaction UDP-N-acetyl-alpha-D-muramate + L-alanine + ATP = UDP-N-acetyl-alpha-D-muramoyl-L-alanine + ADP + phosphate + H(+). It participates in cell wall biogenesis; peptidoglycan biosynthesis. In terms of biological role, cell wall formation. This Mycobacteroides abscessus (strain ATCC 19977 / DSM 44196 / CCUG 20993 / CIP 104536 / JCM 13569 / NCTC 13031 / TMC 1543 / L948) (Mycobacterium abscessus) protein is UDP-N-acetylmuramate--L-alanine ligase.